Reading from the N-terminus, the 376-residue chain is Chaperone protein DnaJ (376 aa).

Residues 5–70 (DYYEVLGVAR…EKRARYDRFG (66 aa)) enclose the J domain. The CR-type zinc finger occupies 137 to 215 (GDEVTLRLPK…CKGSGQTQQV (79 aa)). Zn(2+)-binding residues include Cys150, Cys153, Cys167, Cys170, Cys189, Cys192, Cys203, and Cys206. 4 CXXCXGXG motif repeats span residues 150–157 (CDECGGSG), 167–174 (CRHCGGAG), 189–196 (CPVCRGEG), and 203–210 (CPKCKGSG).

It belongs to the DnaJ family. In terms of assembly, homodimer. Zn(2+) is required as a cofactor.

The protein resides in the cytoplasm. Participates actively in the response to hyperosmotic and heat shock by preventing the aggregation of stress-denatured proteins and by disaggregating proteins, also in an autonomous, DnaK-independent fashion. Unfolded proteins bind initially to DnaJ; upon interaction with the DnaJ-bound protein, DnaK hydrolyzes its bound ATP, resulting in the formation of a stable complex. GrpE releases ADP from DnaK; ATP binding to DnaK triggers the release of the substrate protein, thus completing the reaction cycle. Several rounds of ATP-dependent interactions between DnaJ, DnaK and GrpE are required for fully efficient folding. Also involved, together with DnaK and GrpE, in the DNA replication of plasmids through activation of initiation proteins. This Nitratidesulfovibrio vulgaris (strain ATCC 29579 / DSM 644 / CCUG 34227 / NCIMB 8303 / VKM B-1760 / Hildenborough) (Desulfovibrio vulgaris) protein is Chaperone protein DnaJ.